Reading from the N-terminus, the 336-residue chain is Cytoskeleton protein RodZ (336 aa).

Topologically, residues 1 to 111 are cytoplasmic; it reads MNTEATHDQN…LGKRRKKRDG (111 aa). In terms of domain architecture, HTH cro/C1-type spans 19-71; the sequence is LRNAREQLGLSQQAVAERLCLKVSTVRDIEEDKAPADLASTFLRGYIRSYARL. The H-T-H motif DNA-binding region spans 30 to 49; sequence QQAVAERLCLKVSTVRDIEE. A helical; Signal-anchor for type II membrane protein membrane pass occupies residues 112–132; sequence WLMTFTWLVLFVVIGLSGAWW. The Periplasmic portion of the chain corresponds to 133–336; the sequence is WQDHKAQQEE…TLNAEQSPAQ (204 aa). Positions 148-164 are enriched in polar residues; it reads DQSSAELNNNQSQSVPL. Residues 148–245 are disordered; the sequence is DQSSAELNNN…PLPTDQAGVT (98 aa). The span at 165 to 201 shows a compositional bias: low complexity; the sequence is DTSTTTDQAMATTPTSPVDTTATNTQTPAATTAPSPT. Polar residues predominate over residues 202–217; the sequence is VDSQQNAVVPPSQANV. A compositionally biased stretch (low complexity) spans 218–240; that stretch reads DTAATPAPAATTTPDGAAPLPTD.

The protein belongs to the RodZ family.

Its subcellular location is the cell inner membrane. In terms of biological role, cytoskeletal protein that is involved in cell-shape control through regulation of the length of the long axis. This chain is Cytoskeleton protein RodZ, found in Escherichia coli O7:K1 (strain IAI39 / ExPEC).